Here is a 136-residue protein sequence, read N- to C-terminus: Mini-ribonuclease 3 (136 aa).

The active site involves Asp20.

This sequence belongs to the MrnC RNase family. Homodimer. It depends on Mg(2+) as a cofactor.

The protein localises to the cytoplasm. Involved in correct processing of both the 5' and 3' ends of 23S rRNA precursor. Processes 30S rRNA precursor transcript even in absence of ribonuclease 3 (Rnc); Rnc processes 30S rRNA into smaller rRNA precursors. In Listeria monocytogenes serovar 1/2a (strain ATCC BAA-679 / EGD-e), this protein is Mini-ribonuclease 3.